We begin with the raw amino-acid sequence, 150 residues long: MVEKMSPKTFGGEIMENSDIRAKLLEVLESGVVNGKWTIGIVRLNSELRRLLVNRCQCYINDSETTKSKTKIIAEFCMDAAENGVRYSPDLVNAALTILKSMGYNIKDVQCYYDVDFPAVITVDGEVGVVIKPEHMEDLRVVGVKKLTEF.

This is an uncharacterized protein from Methanocaldococcus jannaschii (strain ATCC 43067 / DSM 2661 / JAL-1 / JCM 10045 / NBRC 100440) (Methanococcus jannaschii).